The sequence spans 22 residues: Cysteine protease inhibitor 4 (22 aa).

This sequence belongs to the protease inhibitor I3 (leguminous Kunitz-type inhibitor) family. As to expression, tubers.

The protein resides in the vacuole. In terms of biological role, inhibitor of papain (cysteine protease). Does not inhibit trypsin, chymotrypsin nor elastase (serine proteases). May protect the plant by inhibiting proteases of invading organisms. This chain is Cysteine protease inhibitor 4, found in Solanum tuberosum (Potato).